Consider the following 79-residue polypeptide: RNA-binding protein Hfq (79 aa).

The Sm domain occupies 10–69; it reads DPFLNALRKEHVPVSIYLVNGIKLQGNIESFDQYVVLLRNTVTQMVYKHAISTVVPARPV.

The protein belongs to the Hfq family. As to quaternary structure, homohexamer.

Functionally, RNA chaperone that binds small regulatory RNA (sRNAs) and mRNAs to facilitate mRNA translational regulation in response to envelope stress, environmental stress and changes in metabolite concentrations. Also binds with high specificity to tRNAs. In Burkholderia cenocepacia (strain HI2424), this protein is RNA-binding protein Hfq.